We begin with the raw amino-acid sequence, 197 residues long: Protein LURP-one-related 9 (197 aa).

The protein belongs to the LOR family.

Might be related to the phospholipid scramblase and tubby-like superfamily of membrane tethered transcription factors. The polypeptide is Protein LURP-one-related 9 (Arabidopsis thaliana (Mouse-ear cress)).